The following is a 61-amino-acid chain: DNA-directed RNA polymerase subunit Rpo10 (61 aa).

4 residues coordinate Zn(2+): Cys6, Cys9, Cys42, and Cys43.

It belongs to the archaeal Rpo10/eukaryotic RPB10 RNA polymerase subunit family. In terms of assembly, part of the RNA polymerase complex. The cofactor is Zn(2+).

The protein resides in the cytoplasm. The enzyme catalyses RNA(n) + a ribonucleoside 5'-triphosphate = RNA(n+1) + diphosphate. Its function is as follows. DNA-dependent RNA polymerase (RNAP) catalyzes the transcription of DNA into RNA using the four ribonucleoside triphosphates as substrates. This Methanothrix thermoacetophila (strain DSM 6194 / JCM 14653 / NBRC 101360 / PT) (Methanosaeta thermophila) protein is DNA-directed RNA polymerase subunit Rpo10.